Here is a 412-residue protein sequence, read N- to C-terminus: MKYNIVFKFNVEGIVDKPDVIGAIFGQTENLFGDDFDLRELQDKGRLGRISVDLSTSKGRSEGTIIIPSNLDKVETALVAAMIENVDKVGPYNAEFKLIDIVDIREEKIKKIIGRAKEILGSWSREKTLDIREVINEITSSVKTGELTEYGPERLPAGPDVDKDPELIIVEGRADVINLLRYGYKNVIAVEGATGKIPQTLVDLTKQKKAVIAFLDGDHGGDLILKELLSSNIKLDYVARAPTGKEVEELTGKEIAKSLSNMVTIAQYIKKQQEAQQAIKQALATETTTTAVTTTSTQIQVEVKPEEKKEIQITVPAQIIEEIKKLPGTLEGILLDENWNIIEKIQVRDIVQKLENISADSIRYIVFDGVITQRLVDLASAKNIKMLIGARIGGINRRPKELELLSFNDIIS.

Positions 165 to 243 constitute a Toprim domain; sequence PELIIVEGRA…KLDYVARAPT (79 aa). Mg(2+) is bound by residues Glu-171, Asp-216, and Asp-218.

Belongs to the archaeal DnaG primase family. Forms a ternary complex with MCM helicase and DNA. Component of the archaeal exosome complex. Mg(2+) serves as cofactor.

It catalyses the reaction ssDNA + n NTP = ssDNA/pppN(pN)n-1 hybrid + (n-1) diphosphate.. Its function is as follows. RNA polymerase that catalyzes the synthesis of short RNA molecules used as primers for DNA polymerase during DNA replication. Also part of the exosome, which is a complex involved in RNA degradation. Acts as a poly(A)-binding protein that enhances the interaction between heteromeric, adenine-rich transcripts and the exosome. This Sulfolobus acidocaldarius (strain ATCC 33909 / DSM 639 / JCM 8929 / NBRC 15157 / NCIMB 11770) protein is DNA primase DnaG.